The primary structure comprises 168 residues: Large ribosomal subunit protein uL10 (168 aa).

It belongs to the universal ribosomal protein uL10 family. In terms of assembly, part of the ribosomal stalk of the 50S ribosomal subunit. The N-terminus interacts with L11 and the large rRNA to form the base of the stalk. The C-terminus forms an elongated spine to which L12 dimers bind in a sequential fashion forming a multimeric L10(L12)X complex.

Forms part of the ribosomal stalk, playing a central role in the interaction of the ribosome with GTP-bound translation factors. The protein is Large ribosomal subunit protein uL10 of Acinetobacter baylyi (strain ATCC 33305 / BD413 / ADP1).